The chain runs to 835 residues: MSDPQERSKAYGLLGERLYAVASANSHMLAGYDSLDFTARLVRLTGEATALKAVDPLLPCAVSLLFMDFPLQLPCTPEETLRLVRRAYDPNTLEEVDYSTLSGYATQFARVKGQRGRWRHLGHLVCNDKAFRERYFPKKKHAAAAIKTNIRLGPLARAWAARYGLAALGSHLAYMVGMPNDRACATLLLAQTYKARFGSEGVAWAIASVRQPENAKGLSNALKALGSNTSEPGALFVEANTLQGRYDRTLDMDHEVESRCSPAAIADQVIPYTDELGACIDFILDTELGGDTIELPDEDEWWTSRWLWCVNGSQNALSDKALGIKNKSGQRYRRMAAEEVNNNPVPAWNGHTSVSPSVKLENGKDRAIFACDTRSYFAFTYWLTPIEKKWRGARVILNPGEGGLYGTARRIRGSQTSGGVNLMLDYDNFNSQHSNETMAALYEKALSRTNAPAYLKKAVAASVESTYIHYKGRDRHVLGTLMSGHRATTFTNSVLNAAYICYAVGIPAFKRMISLHAGDDVYLRLPTLADCATTLNNTKRVGCRMNPTKQSIGYTGAEFLRLGINKSYAIGYLCRAIASLVSGSWTSLDELQPLNALNGAIVQTRSCLNRGAATGLPELISASFVGLRGFKRRDLLELLTGVATIKPGPVYTSSCVIREYVVEQPPPPQFDVPPGAGMHATMSYLARHTTLVEAQALEIARPAIKSLMLSSSYGKAGPGAQTRPHVPMPKLRRQPPRVAVGFSMAHELTGRGVKEGCLSGHPLLRLFEQRLTDDDLRALVALVGGNTSAKDIRAEAFGAESSSSTIMGILPHSDASNYCKRTRNGNIIVPYHIRS.

It belongs to the totiviridae RNA-directed RNA polymerase family.

It catalyses the reaction RNA(n) + a ribonucleoside 5'-triphosphate = RNA(n+1) + diphosphate. RNA-dependent RNA polymerase which replicates the viral genome. Catalyzes the transcription of fully conservative plus-strand genomic RNAs that are extruded from the virion into the cytoplasm where they function as mRNAs for translation of viral proteins and also as substrates for encapsidation to form new virions. Once encapsidated, the positive strand is converted to dsRNA by the RNA-directed RNA polymerase. This Helminthosporium victoriae virus-190S (Hv190SV) protein is Probable RNA-directed RNA polymerase.